The primary structure comprises 64 residues: Large ribosomal subunit protein bL35 (64 aa).

Positions 1 to 22 (MPKAKTHSGASKRFRRTGTGKI) are disordered.

It belongs to the bacterial ribosomal protein bL35 family.

The polypeptide is Large ribosomal subunit protein bL35 (Mycobacterium tuberculosis (strain ATCC 25177 / H37Ra)).